We begin with the raw amino-acid sequence, 222 residues long: Hexitol phosphatase B (222 aa).

The active-site Nucleophile is the Asp-13. The a divalent metal cation site is built by Asp-13 and Asp-15. Residues 13–15 (DMD), 115–116 (SA), and Lys-148 contribute to the substrate site. Asp-15 (proton donor) is an active-site residue. Position 173 (Asp-173) interacts with a divalent metal cation.

It belongs to the HAD-like hydrolase superfamily. CbbY/CbbZ/Gph/YieH family. Mg(2+) serves as cofactor. The cofactor is Mn(2+). Requires Co(2+) as cofactor. It depends on Zn(2+) as a cofactor.

It catalyses the reaction sugar phosphate + H2O = sugar + phosphate.. The catalysed reaction is 2-deoxy-D-glucose 6-phosphate + H2O = 2-deoxy-D-glucose + phosphate. It carries out the reaction D-mannitol 1-phosphate + H2O = D-mannitol + phosphate. The enzyme catalyses D-sorbitol 6-phosphate + H2O = D-sorbitol + phosphate. In terms of biological role, sugar-phosphate phosphohydrolase that catalyzes the dephosphorylation of D-mannitol 1-phosphate and D-sorbitol 6-phosphate. Also catalyzes the dephosphorylation of 2-deoxyglucose 6-phosphate (2dGlu6P); this is a biologically important activity in vivo since it contributes to the elimination of this toxic compound and plays an important role in the resistance of E.coli to 2-deoxyglucose. To a lesser extent, is also able to dephosphorylate mannose 6-phosphate (Man6P), erythrose-4-phosphate, 2-deoxyribose-5-phosphate (2dRib5P), ribose-5-phosphate (Rib5P) and glucose-6-phosphate (Glu6P) in vitro. The polypeptide is Hexitol phosphatase B (Escherichia coli (strain K12)).